We begin with the raw amino-acid sequence, 235 residues long: Orotidine 5'-phosphate decarboxylase (235 aa).

Residues Asp10, Lys32, 59 to 68 (DLKLHDIPNT), Thr123, Arg184, Gln193, Gly213, and Arg214 contribute to the substrate site. The active-site Proton donor is Lys61.

The protein belongs to the OMP decarboxylase family. Type 1 subfamily. Homodimer.

The catalysed reaction is orotidine 5'-phosphate + H(+) = UMP + CO2. Its pathway is pyrimidine metabolism; UMP biosynthesis via de novo pathway; UMP from orotate: step 2/2. In terms of biological role, catalyzes the decarboxylation of orotidine 5'-monophosphate (OMP) to uridine 5'-monophosphate (UMP). The sequence is that of Orotidine 5'-phosphate decarboxylase from Paramagnetospirillum magneticum (strain ATCC 700264 / AMB-1) (Magnetospirillum magneticum).